The primary structure comprises 299 residues: Pyridoxal 5'-phosphate synthase subunit PdxS (299 aa).

Aspartate 29 lines the D-ribose 5-phosphate pocket. Residue lysine 86 is the Schiff-base intermediate with D-ribose 5-phosphate of the active site. Position 158 (glycine 158) interacts with D-ribose 5-phosphate. Residue arginine 170 coordinates D-glyceraldehyde 3-phosphate. D-ribose 5-phosphate is bound by residues glycine 219 and 240–241 (GS).

This sequence belongs to the PdxS/SNZ family. In the presence of PdxT, forms a dodecamer of heterodimers.

The enzyme catalyses aldehydo-D-ribose 5-phosphate + D-glyceraldehyde 3-phosphate + L-glutamine = pyridoxal 5'-phosphate + L-glutamate + phosphate + 3 H2O + H(+). It functions in the pathway cofactor biosynthesis; pyridoxal 5'-phosphate biosynthesis. In terms of biological role, catalyzes the formation of pyridoxal 5'-phosphate from ribose 5-phosphate (RBP), glyceraldehyde 3-phosphate (G3P) and ammonia. The ammonia is provided by the PdxT subunit. Can also use ribulose 5-phosphate and dihydroxyacetone phosphate as substrates, resulting from enzyme-catalyzed isomerization of RBP and G3P, respectively. In Mycobacterium bovis (strain ATCC BAA-935 / AF2122/97), this protein is Pyridoxal 5'-phosphate synthase subunit PdxS.